Here is a 243-residue protein sequence, read N- to C-terminus: Protein GrpE (243 aa).

It belongs to the GrpE family. In terms of assembly, homodimer.

It localises to the cytoplasm. Its function is as follows. Participates actively in the response to hyperosmotic and heat shock by preventing the aggregation of stress-denatured proteins, in association with DnaK and GrpE. It is the nucleotide exchange factor for DnaK and may function as a thermosensor. Unfolded proteins bind initially to DnaJ; upon interaction with the DnaJ-bound protein, DnaK hydrolyzes its bound ATP, resulting in the formation of a stable complex. GrpE releases ADP from DnaK; ATP binding to DnaK triggers the release of the substrate protein, thus completing the reaction cycle. Several rounds of ATP-dependent interactions between DnaJ, DnaK and GrpE are required for fully efficient folding. The protein is Protein GrpE of Mycoplasma mobile (strain ATCC 43663 / 163K / NCTC 11711) (Mesomycoplasma mobile).